Here is a 546-residue protein sequence, read N- to C-terminus: Probable protein kinase UbiB (546 aa).

The region spanning 124-502 is the Protein kinase domain; that stretch reads DFEIKPLASA…HVRQGQSRYF (379 aa). ATP-binding positions include 130 to 138 and K153; that span reads LASASIAQV. The Proton acceptor role is filled by D288. Transmembrane regions (helical) follow at residues 501 to 521 and 522 to 542; these read YFLG…VSRP and EWGL…FVGW.

Belongs to the ABC1 family. UbiB subfamily.

The protein resides in the cell inner membrane. The protein operates within cofactor biosynthesis; ubiquinone biosynthesis [regulation]. Functionally, is probably a protein kinase regulator of UbiI activity which is involved in aerobic coenzyme Q (ubiquinone) biosynthesis. In Shigella boydii serotype 18 (strain CDC 3083-94 / BS512), this protein is Probable protein kinase UbiB.